A 355-amino-acid polypeptide reads, in one-letter code: Galectin-9 (355 aa).

2 consecutive Galectin domains span residues 17-148 (FTGM…ISFQ) and 227-355 (FFTS…HVQT). A beta-D-galactoside is bound by residues N48, H61, R65, N75, 82–88 (WGTEERK), H267, R271, T281, and 287–293 (WGSEERS).

The protein localises to the cytoplasm. It localises to the nucleus. The protein resides in the secreted. Binds galactosides. Has high affinity for the Forssman pentasaccharide. Ligand for HAVCR2/TIM3. Binding to HAVCR2 induces T-helper type 1 lymphocyte (Th1) death. Also stimulates bactericidal activity in infected macrophages by causing macrophage activation and IL1B secretion which restricts intracellular bacterial growth. Ligand for P4HB; the interaction retains P4HB at the cell surface of Th2 T helper cells, increasing disulfide reductase activity at the plasma membrane, altering the plasma membrane redox state and enhancing cell migration. Ligand for CD44; the interaction enhances binding of SMAD3 to the FOXP3 promoter, leading to up-regulation of FOXP3 expression and increased induced regulatory T (iTreg) cell stability and suppressive function. Promotes ability of mesenchymal stromal cells to suppress T-cell proliferation. Expands regulatory T-cells and induces cytotoxic T-cell apoptosis following virus infection. Activates ERK1/2 phosphorylation inducing cytokine (IL-6, IL-8, IL-12) and chemokine (CCL2) production in mast and dendritic cells. Inhibits degranulation and induces apoptosis of mast cells. Induces maturation and migration of dendritic cells. Inhibits natural killer (NK) cell function. Can transform NK cell phenotype from peripheral to decidual during pregnancy. Astrocyte derived galectin-9 enhances microglial TNF production. May play a role in thymocyte-epithelial interactions relevant to the biology of the thymus. May provide the molecular basis for urate flux across cell membranes, allowing urate that is formed during purine metabolism to efflux from cells and serving as an electrogenic transporter that plays an important role in renal and gastrointestinal urate excretion. Highly selective to the anion urate. The polypeptide is Galectin-9 (LGALS9) (Bos taurus (Bovine)).